The following is a 441-amino-acid chain: Xaa-Pro dipeptidase (441 aa).

Mn(2+) contacts are provided by Asp244, Asp255, His336, Glu381, and Glu420.

The protein belongs to the peptidase M24B family. Bacterial-type prolidase subfamily. Mn(2+) is required as a cofactor.

It carries out the reaction Xaa-L-Pro dipeptide + H2O = an L-alpha-amino acid + L-proline. Functionally, splits dipeptides with a prolyl residue in the C-terminal position. The sequence is that of Xaa-Pro dipeptidase from Xanthomonas euvesicatoria pv. vesicatoria (strain 85-10) (Xanthomonas campestris pv. vesicatoria).